The primary structure comprises 491 residues: Proline--tRNA ligase (491 aa).

This sequence belongs to the class-II aminoacyl-tRNA synthetase family. ProS type 3 subfamily. Homodimer.

The protein resides in the cytoplasm. It catalyses the reaction tRNA(Pro) + L-proline + ATP = L-prolyl-tRNA(Pro) + AMP + diphosphate. Functionally, catalyzes the attachment of proline to tRNA(Pro) in a two-step reaction: proline is first activated by ATP to form Pro-AMP and then transferred to the acceptor end of tRNA(Pro). The sequence is that of Proline--tRNA ligase from Amoebophilus asiaticus (strain 5a2).